The sequence spans 388 residues: Chaperone protein DnaJ (388 aa).

The J domain occupies aspartate 6–glycine 71. Residues glycine 147–glutamine 229 form a CR-type zinc finger. Residues cysteine 160, cysteine 163, cysteine 177, cysteine 180, cysteine 203, cysteine 206, cysteine 217, and cysteine 220 each coordinate Zn(2+). CXXCXGXG motif repeat units lie at residues cysteine 160–glycine 167, cysteine 177–glycine 184, cysteine 203–glycine 210, and cysteine 217–glycine 224.

It belongs to the DnaJ family. In terms of assembly, homodimer. Requires Zn(2+) as cofactor.

The protein localises to the cytoplasm. Participates actively in the response to hyperosmotic and heat shock by preventing the aggregation of stress-denatured proteins and by disaggregating proteins, also in an autonomous, DnaK-independent fashion. Unfolded proteins bind initially to DnaJ; upon interaction with the DnaJ-bound protein, DnaK hydrolyzes its bound ATP, resulting in the formation of a stable complex. GrpE releases ADP from DnaK; ATP binding to DnaK triggers the release of the substrate protein, thus completing the reaction cycle. Several rounds of ATP-dependent interactions between DnaJ, DnaK and GrpE are required for fully efficient folding. Also involved, together with DnaK and GrpE, in the DNA replication of plasmids through activation of initiation proteins. The chain is Chaperone protein DnaJ from Caldicellulosiruptor bescii (strain ATCC BAA-1888 / DSM 6725 / KCTC 15123 / Z-1320) (Anaerocellum thermophilum).